The primary structure comprises 555 residues: Lysine--tRNA ligase (555 aa).

A 'HIGH' region motif is present at residues 37 to 45 (TSGRLHVGN). The 'KMSKS' region signature appears at 301 to 305 (AMSSS).

It belongs to the class-I aminoacyl-tRNA synthetase family.

The protein localises to the cytoplasm. It carries out the reaction tRNA(Lys) + L-lysine + ATP = L-lysyl-tRNA(Lys) + AMP + diphosphate. In Methanopyrus kandleri (strain AV19 / DSM 6324 / JCM 9639 / NBRC 100938), this protein is Lysine--tRNA ligase.